Here is a 459-residue protein sequence, read N- to C-terminus: Putrescine aminotransferase (459 aa).

Residues Gly150–Thr151 and Gln274 each bind pyridoxal 5'-phosphate. Position 300 is an N6-(pyridoxal phosphate)lysine (Lys300). Thr332 provides a ligand contact to pyridoxal 5'-phosphate.

This sequence belongs to the class-III pyridoxal-phosphate-dependent aminotransferase family. Putrescine aminotransferase subfamily. Pyridoxal 5'-phosphate is required as a cofactor.

It carries out the reaction an alkane-alpha,omega-diamine + 2-oxoglutarate = an omega-aminoaldehyde + L-glutamate. It catalyses the reaction putrescine + 2-oxoglutarate = 1-pyrroline + L-glutamate + H2O. The enzyme catalyses cadaverine + 2-oxoglutarate = 5-aminopentanal + L-glutamate. It functions in the pathway amine and polyamine degradation; putrescine degradation; 4-aminobutanal from putrescine (transaminase route): step 1/1. Catalyzes the aminotransferase reaction from putrescine to 2-oxoglutarate, leading to glutamate and 4-aminobutanal, which spontaneously cyclizes to form 1-pyrroline. This is the first step in one of two pathways for putrescine degradation, where putrescine is converted into 4-aminobutanoate (gamma-aminobutyrate or GABA) via 4-aminobutanal. Also functions as a cadaverine transaminase in a a L-lysine degradation pathway to succinate that proceeds via cadaverine, glutarate and L-2-hydroxyglutarate. This chain is Putrescine aminotransferase, found in Escherichia coli O9:H4 (strain HS).